Consider the following 294-residue polypeptide: MKKTLLAAGAVVALSTTFAAGAAENDKPQYLSDWWHQSVNVVGSYHTRFGPQIRNDTYLEYEAFAKKDWFDFYGYIDAPVFFGGNSTAKGIWNKGSPLFMEIEPRFSIDKLTNTDLSFGPFKEWYFANNYIYDMGRNDSQEQSTWYMGLGTDIDTGLPMSLSLNVYAKYQWQNYGASNENEWDGYRFKVKYFVPLTDLWGGSLSYIGFTNFDWGSDLGDDNFYDLNGKHARTSNSIASSHILALNYAHWHYSIVARYFHNGGQWADDAKLNFGDGPFSVRSTGWGGYFVVGYNF.

Positions 1 to 22 (MKKTLLAAGAVVALSTTFAAGA) are cleaved as a signal peptide.

This sequence belongs to the nucleoside-specific channel-forming outer membrane porin (Tsx) (TC 1.B.10) family.

It localises to the cell outer membrane. Functions as a substrate-specific channel for nucleosides and deoxynucleosides. Also functions in albicidin uptake and as receptor for colicin K. Also is a receptor for several Tsx-specific bacteriophages. The chain is Nucleoside-specific channel-forming protein Tsx from Klebsiella pneumoniae.